Consider the following 542-residue polypeptide: Nibrin homolog (542 aa).

Residues 25-90 (YKVGRKGCDI…YGTFVKTDLG (66 aa)) form the FHA domain. Residues 119 to 195 (IYRLSLIPLV…KTIILTNWVM (77 aa)) form the BRCT domain. A disordered region spans residues 409–430 (SRGHMDEKNSSDSVTIRRDRND). Positions 465 to 500 (VDFKRFRKGNVTCGNSFSSLIPFAKDPYKEYDSWDV) are involved in MRE11-binding.

This sequence belongs to the Nibrin family. In terms of assembly, component of the MRN complex composed of two heterodimers RAD50 and MRE11 associated with a single NBS1.

It localises to the nucleus. Its subcellular location is the chromosome. In terms of biological role, component of the MRN complex, which plays a central role in double-strand break (DSB) repair, DNA recombination, maintenance of telomere integrity and meiosis. The MRN complex is involved in the repair of DNA double-strand breaks (DSBs) via homologous recombination (HR), an error-free mechanism which primarily occurs during S and G2 phases. The complex (1) mediates the end resection of damaged DNA, which generates proper single-stranded DNA, a key initial steps in HR, and is (2) required for the recruitment of other repair factors and efficient activation of ATM and ATR upon DNA damage. The MRN complex possesses single-strand endonuclease activity and double-strand-specific 3'-5' exonuclease activity, which are provided by MRE11, to initiate end resection, which is required for single-strand invasion and recombination. Within the MRN complex, NBS1 acts as a protein-protein adapter, which specifically recognizes and binds phosphorylated proteins, promoting their recruitment to DNA damage sites. Recruits MRE11 and RAD50 components of the MRN complex to DSBs in response to DNA damage. The protein is Nibrin homolog of Arabidopsis thaliana (Mouse-ear cress).